The following is a 438-amino-acid chain: Envelope glycoprotein M (438 aa).

Residues 1–13 (MAGSAQPAAVHWR) lie on the Intravirion side of the membrane. The chain crosses the membrane as a helical span at residues 14–34 (LWLAQVGVFAGLALLLLITLI). At 35–88 (GAASPGAGLPCFYAAIVNYNARNLSADGGAWAQRELGARHPALFLETPTTAAFS) the chain is on the virion surface side. Residues 89-109 (AYTAVVLLAVAAFDVAAAIII) form a helical membrane-spanning segment. Over 110–132 (RRENSGGFAAAYHMNALATLATP) the chain is Intravirion. The chain crosses the membrane as a helical span at residues 133–153 (PGALLLGALAAWTLQAAVLLL). The Virion surface segment spans residues 154 to 158 (SHKIM). The helical transmembrane segment at 159 to 179 (VLAAATYLAHLAPPAAFVGLF) threads the bilayer. Residues 180–212 (CTAGLPGAEYAQAVHALRERSPRAHRLLGPGRA) are Intravirion-facing. Residues 213-233 (VMINLAGGLLALIIGTAPLML) traverse the membrane as a helical segment. Over 234–248 (GQLLGAGLGLSLAQT) the chain is Virion surface. The helical transmembrane segment at 249–269 (VVAGVTVFCLAAVLFLVLTEL) threads the bilayer. The Intravirion portion of the chain corresponds to 270-276 (VLSRYTQ). A helical transmembrane segment spans residues 277–297 (VLPGPAFGTLVAASCIAVASH). The Virion surface segment spans residues 298–317 (DYFHQLRGVVRTQAPRAAAR). Residues 318–338 (VKLALAGVALLAVAMLVLRLV) traverse the membrane as a helical segment. Residues 339-438 (RACLHHRRKG…PRSPPPAHVK (100 aa)) lie on the Intravirion side of the membrane. Residues 395-438 (EEAVYEAHAPPRPPTIPLRRPEVPHSRASHPRPPPRSPPPAHVK) form a disordered region. Over residues 425–438 (PRPPPRSPPPAHVK) the composition is skewed to pro residues.

Belongs to the herpesviridae glycoprotein M family. In terms of assembly, interacts (via N-terminus) with gN (via N-terminus). The gM-gN heterodimer forms the gCII complex. Post-translationally, N-glycosylated. It is not O-glycosylated.

The protein localises to the virion membrane. The protein resides in the host Golgi apparatus. It is found in the host trans-Golgi network. It localises to the host endosome membrane. Its subcellular location is the host nucleus inner membrane. In terms of biological role, envelope glycoprotein important for virion assembly and egress. Plays a role in the correct incorporation of gH-gL into virion membrane. Directs the glycoprotein N (gN) to the host trans-Golgi network. In Bovine herpesvirus 1.1 (strain Cooper) (BoHV-1), this protein is Envelope glycoprotein M.